Here is a 471-residue protein sequence, read N- to C-terminus: NALCN channel auxiliary factor 2 (471 aa).

A helical transmembrane segment spans residues 47–67 (LASLLFFTVLLADHLWLCAGA). Residues 76-115 (SAMRPPWGAGRERQPVPPRAVLPPPPPSPGEPSASSGTCG) form a disordered region. The segment covering 90 to 105 (PVPPRAVLPPPPPSPG) has biased composition (pro residues). A glycan (N-linked (GlcNAc...) asparagine) is linked at asparagine 120. 2 disordered regions span residues 158 to 178 (EPTT…APEF) and 399 to 424 (HYHP…GGSR). Residues 161 to 171 (TPAPPLRPPDS) show a composition bias toward pro residues. The helical transmembrane segment at 432 to 452 (LCVLVLILLHTVVSFSSSQSG) threads the bilayer.

This sequence belongs to the NALF family.

The protein resides in the membrane. In terms of biological role, probable component of the NALCN channel complex, a channel that regulates the resting membrane potential and controls neuronal excitability. This is NALCN channel auxiliary factor 2 (Nalf2) from Mus musculus (Mouse).